The chain runs to 112 residues: Protein F-112 (112 aa).

Essential for virus function. This is Protein F-112 from Saccharolobus solfataricus (Sulfolobus solfataricus).